The chain runs to 367 residues: Peptide chain release factor 2 (367 aa).

Gln254 carries the post-translational modification N5-methylglutamine.

Belongs to the prokaryotic/mitochondrial release factor family. Methylated by PrmC. Methylation increases the termination efficiency of RF2.

Its subcellular location is the cytoplasm. In terms of biological role, peptide chain release factor 2 directs the termination of translation in response to the peptide chain termination codons UGA and UAA. The protein is Peptide chain release factor 2 of Burkholderia mallei (strain ATCC 23344).